The chain runs to 227 residues: Cytochrome c oxidase subunit 2 (227 aa).

The Mitochondrial intermembrane segment spans residues 1–14 (MAYPFQLGLQDATS). The helical transmembrane segment at 15–45 (PIMEELANFHDHTLMIVFLISSLVLYIISSM) threads the bilayer. Topologically, residues 46–59 (LTTKLTHTSTMDAQ) are mitochondrial matrix. Residues 60–87 (EVETIWTILPAVILILIALPSLRILYMM) form a helical membrane-spanning segment. At 88-227 (DEINNPALTV…HFENWSASMI (140 aa)) the chain is on the mitochondrial intermembrane side. Cu cation contacts are provided by H161, C196, E198, C200, H204, and M207. E198 serves as a coordination point for Mg(2+).

This sequence belongs to the cytochrome c oxidase subunit 2 family. In terms of assembly, component of the cytochrome c oxidase (complex IV, CIV), a multisubunit enzyme composed of 14 subunits. The complex is composed of a catalytic core of 3 subunits MT-CO1, MT-CO2 and MT-CO3, encoded in the mitochondrial DNA, and 11 supernumerary subunits COX4I, COX5A, COX5B, COX6A, COX6B, COX6C, COX7A, COX7B, COX7C, COX8 and NDUFA4, which are encoded in the nuclear genome. The complex exists as a monomer or a dimer and forms supercomplexes (SCs) in the inner mitochondrial membrane with NADH-ubiquinone oxidoreductase (complex I, CI) and ubiquinol-cytochrome c oxidoreductase (cytochrome b-c1 complex, complex III, CIII), resulting in different assemblies (supercomplex SCI(1)III(2)IV(1) and megacomplex MCI(2)III(2)IV(2)). Found in a complex with TMEM177, COA6, COX18, COX20, SCO1 and SCO2. Interacts with TMEM177 in a COX20-dependent manner. Interacts with COX20. Interacts with COX16. Requires Cu cation as cofactor.

It localises to the mitochondrion inner membrane. It carries out the reaction 4 Fe(II)-[cytochrome c] + O2 + 8 H(+)(in) = 4 Fe(III)-[cytochrome c] + 2 H2O + 4 H(+)(out). Component of the cytochrome c oxidase, the last enzyme in the mitochondrial electron transport chain which drives oxidative phosphorylation. The respiratory chain contains 3 multisubunit complexes succinate dehydrogenase (complex II, CII), ubiquinol-cytochrome c oxidoreductase (cytochrome b-c1 complex, complex III, CIII) and cytochrome c oxidase (complex IV, CIV), that cooperate to transfer electrons derived from NADH and succinate to molecular oxygen, creating an electrochemical gradient over the inner membrane that drives transmembrane transport and the ATP synthase. Cytochrome c oxidase is the component of the respiratory chain that catalyzes the reduction of oxygen to water. Electrons originating from reduced cytochrome c in the intermembrane space (IMS) are transferred via the dinuclear copper A center (CU(A)) of subunit 2 and heme A of subunit 1 to the active site in subunit 1, a binuclear center (BNC) formed by heme A3 and copper B (CU(B)). The BNC reduces molecular oxygen to 2 water molecules using 4 electrons from cytochrome c in the IMS and 4 protons from the mitochondrial matrix. The polypeptide is Cytochrome c oxidase subunit 2 (MT-CO2) (Malacomys longipes (Big-eared swamp rat)).